Consider the following 646-residue polypeptide: Epithelial sodium channel subunit beta-2 (646 aa).

Over 1–57 (MIQGKLKRLKRYFTRALHRIQKGPGYTYKELLVWFCDNTNTHGPKRIIKEGPKKRVM) the chain is Cytoplasmic. A helical transmembrane segment spans residues 58-78 (WFILTLVFAGLVFWQWGLLIL). Topologically, residues 79-551 (TYLSYGVSVS…GGQFGFWMGG (473 aa)) are extracellular. Disulfide bonds link cysteine 104/cysteine 290, cysteine 214/cysteine 221, cysteine 267/cysteine 274, cysteine 380/cysteine 467, cysteine 405/cysteine 463, cysteine 409/cysteine 459, cysteine 418/cysteine 445, and cysteine 420/cysteine 434. A helical membrane pass occupies residues 552–572 (SVLCIIEFGEIIIDCMWITIL). Topologically, residues 573-646 (KLLAWIRNRR…IEPVSSDEEN (74 aa)) are cytoplasmic. Residues 586–646 (QRPQYADPPP…IEPVSSDEEN (61 aa)) form a disordered region. The segment covering 610 to 619 (QHDDGNHVTE) has biased composition (basic and acidic residues).

The protein belongs to the amiloride-sensitive sodium channel (TC 1.A.6) family. SCNN1B subfamily. Component of the heterotrimeric epithelial sodium channel (ENaC) composed of an alpha/SCNN1A, a beta/SCNN1B and a gamma/SCNN1G subunit.

It localises to the apical cell membrane. The protein localises to the cytoplasmic vesicle membrane. It carries out the reaction Na(+)(in) = Na(+)(out). Originally identified and characterized by its inhibition by the diuretic drug amiloride. In terms of biological role, this is one of the three pore-forming subunits of the heterotrimeric epithelial sodium channel (ENaC), a critical regulator of sodium balance and fluid homeostasis. ENaC operates in epithelial tissues, where it mediates the electrodiffusion of sodium ions from extracellular fluid through the apical membrane of cells, with water following osmotically. In Xenopus laevis (African clawed frog), this protein is Epithelial sodium channel subunit beta-2 (scnn1b-b).